We begin with the raw amino-acid sequence, 1479 residues long: C-type mannose receptor 2 (1479 aa).

A signal peptide spans M1–P30. Over G31–A1414 the chain is Extracellular. The region spanning P41–L167 is the Ricin B-type lectin domain. C54 and C68 are oxidised to a cystine. Residue N69 is glycosylated (N-linked (GlcNAc...) (complex) asparagine). An intrachain disulfide couples C93 to C112. N140 is a glycosylation site (N-linked (GlcNAc...) asparagine). Residues S182–I230 enclose the Fibronectin type-II domain. Cystine bridges form between C187-C213, C201-C228, C266-C359, and C335-C351. The 117-residue stretch at L244 to K360 folds into the C-type lectin 1 domain. The N-linked (GlcNAc...) asparagine glycan is linked to N364. C-type lectin domains follow at residues F389–K505, H528–C644, K678–K809, and F832–K951. Intrachain disulfides connect C410–C504 and C481–C496. N588 carries an N-linked (GlcNAc...) asparagine glycan. 5 cysteine pairs are disulfide-bonded: C618–C635, C704–C808, C785–C800, C853–C950, and C927–C942. N-linked (GlcNAc...) asparagine glycosylation is found at N954 and N1029. 3 consecutive C-type lectin domains span residues F979–C1107, Y1132–C1243, and F1273–C1393. An intrachain disulfide couples C1078 to C1098. K1142 participates in a covalent cross-link: Glycyl lysine isopeptide (Lys-Gly) (interchain with G-Cter in SUMO1). C1220 and C1234 are joined by a disulfide. N1350 carries an N-linked (GlcNAc...) asparagine glycan. C1369 and C1384 form a disulfide bridge. Residues L1415–L1435 form a helical membrane-spanning segment. Over Y1436 to E1479 the chain is Cytoplasmic. The tract at residues A1450 to E1479 is disordered.

Interacts with C-terminal region of type I collagen/COL1A1. Interacts directly with PLAUR/UPAR and PLAU/pro-UPA to form a tri-molecular complex. Interacts with collagen V. Post-translationally, N-glycosylated. Ubiquitous with low expression in brain, placenta, lung, kidney, pancreas, spleen, thymus and colon. Expressed in endothelial cells, fibroblasts and macrophages. Highly expressed in fetal lung and kidney.

It localises to the membrane. In terms of biological role, may play a role as endocytotic lectin receptor displaying calcium-dependent lectin activity. Internalizes glycosylated ligands from the extracellular space for release in an endosomal compartment via clathrin-mediated endocytosis. May be involved in plasminogen activation system controlling the extracellular level of PLAUR/PLAU, and thus may regulate protease activity at the cell surface. May contribute to cellular uptake, remodeling and degradation of extracellular collagen matrices. May play a role during cancer progression as well as in other chronic tissue destructive diseases acting on collagen turnover. May participate in remodeling of extracellular matrix cooperating with the matrix metalloproteinases (MMPs). This chain is C-type mannose receptor 2 (MRC2), found in Homo sapiens (Human).